The primary structure comprises 145 residues: MIALIQRVKQAKVDVDGQTIGAIDKGLLVLLGVEREDDQAKMEKLATKVMSYRIFSDEDGKMNLNLKQVGGSLLVVSQFTLAADTGRGLRPSFSGAGTPEQAKQLYQAFVDYCAAQGVPVQTGEFAADMQVSLVNDGPVTFNLQV.

Positions 137-138 (GP) match the Gly-cisPro motif, important for rejection of L-amino acids motif.

This sequence belongs to the DTD family. As to quaternary structure, homodimer.

The protein resides in the cytoplasm. It catalyses the reaction glycyl-tRNA(Ala) + H2O = tRNA(Ala) + glycine + H(+). The catalysed reaction is a D-aminoacyl-tRNA + H2O = a tRNA + a D-alpha-amino acid + H(+). Functionally, an aminoacyl-tRNA editing enzyme that deacylates mischarged D-aminoacyl-tRNAs. Also deacylates mischarged glycyl-tRNA(Ala), protecting cells against glycine mischarging by AlaRS. Acts via tRNA-based rather than protein-based catalysis; rejects L-amino acids rather than detecting D-amino acids in the active site. By recycling D-aminoacyl-tRNA to D-amino acids and free tRNA molecules, this enzyme counteracts the toxicity associated with the formation of D-aminoacyl-tRNA entities in vivo and helps enforce protein L-homochirality. This is D-aminoacyl-tRNA deacylase from Shewanella loihica (strain ATCC BAA-1088 / PV-4).